The following is a 247-amino-acid chain: Ribonuclease 3 (247 aa).

Residues 21-149 (LQKLSKKIGI…LVGAIYLDQG (129 aa)) enclose the RNase III domain. A Mg(2+)-binding site is contributed by Glu62. Asp66 is an active-site residue. The Mg(2+) site is built by Asn135 and Glu138. Residue Glu138 is part of the active site. Residues 176–245 (DYKTQLQEYS…AKELYNRIRK (70 aa)) enclose the DRBM domain.

Belongs to the ribonuclease III family. In terms of assembly, homodimer. Mg(2+) serves as cofactor.

Its subcellular location is the cytoplasm. The catalysed reaction is Endonucleolytic cleavage to 5'-phosphomonoester.. Its function is as follows. Digests double-stranded RNA. Involved in the processing of primary rRNA transcript to yield the immediate precursors to the large and small rRNAs (23S and 16S). Processes some mRNAs, and tRNAs when they are encoded in the rRNA operon. Processes pre-crRNA and tracrRNA of type II CRISPR loci if present in the organism. The sequence is that of Ribonuclease 3 from Leptospira interrogans serogroup Icterohaemorrhagiae serovar copenhageni (strain Fiocruz L1-130).